The chain runs to 143 residues: Large ribosomal subunit protein uL15 (143 aa).

Over residues 1 to 13 (MIRKKKKVKKIRG) the composition is skewed to basic residues. Positions 1-39 (MIRKKKKVKKIRGSRTCGGGSHKKRRGAGNKGGRGMAGG) are disordered. A compositionally biased stretch (gly residues) spans 29–38 (GNKGGRGMAG).

Belongs to the universal ribosomal protein uL15 family. In terms of assembly, part of the 50S ribosomal subunit.

Binds to the 23S rRNA. This chain is Large ribosomal subunit protein uL15, found in Methanocaldococcus jannaschii (strain ATCC 43067 / DSM 2661 / JAL-1 / JCM 10045 / NBRC 100440) (Methanococcus jannaschii).